The sequence spans 578 residues: Potassium-transporting ATPase potassium-binding subunit (578 aa).

A run of 11 helical transmembrane segments spans residues 3-23 (AAAL…AVPL), 67-87 (AAAA…LERL), 95-115 (PAGL…SFAT), 136-156 (ALTV…AALV), 181-201 (LLLP…VPQT), 264-284 (LEAL…GALV), 291-311 (WTVY…TVSA), 396-416 (GLYG…LMVG), 436-456 (LAIL…CLLP), 504-524 (VAML…AGAF), and 543-563 (LFAG…FLPA).

It belongs to the KdpA family. In terms of assembly, the system is composed of three essential subunits: KdpA, KdpB and KdpC.

The protein localises to the cell inner membrane. Part of the high-affinity ATP-driven potassium transport (or Kdp) system, which catalyzes the hydrolysis of ATP coupled with the electrogenic transport of potassium into the cytoplasm. This subunit binds the periplasmic potassium ions and delivers the ions to the membrane domain of KdpB through an intramembrane tunnel. The sequence is that of Potassium-transporting ATPase potassium-binding subunit from Anaeromyxobacter dehalogenans (strain 2CP-C).